We begin with the raw amino-acid sequence, 244 residues long: Mediator of RNA polymerase II transcription subunit 9 (244 aa).

Over residues 1-10 (MDQFSGGGGN) the composition is skewed to gly residues. Disordered stretches follow at residues 1-28 (MDQFSGGGGNWSMIPNVQAQGNFGTPTN) and 96-131 (QQRLLQSPPLQPQSLQSPPPQQTMVHTPQSMMHTPQ). Positions 13-28 (MIPNVQAQGNFGTPTN) are enriched in polar residues. Low complexity-rich tracts occupy residues 96-111 (QQRLLQSPPLQPQSLQ) and 122-131 (TPQSMMHTPQ). Residues 212–239 (KRNVEESEQLLQQRRDLIVEYRKSIEEI) are a coiled coil.

The protein belongs to the plant Mediator complex subunit 9 family. In terms of assembly, component of the Mediator complex. Interacts with MEE14/CBP1.

Its subcellular location is the nucleus. Its function is as follows. Component of the Mediator complex, a coactivator involved in the regulated transcription of nearly all RNA polymerase II-dependent genes. Mediator functions as a bridge to convey information from gene-specific regulatory proteins to the basal RNA polymerase II transcription machinery. The Mediator complex, having a compact conformation in its free form, is recruited to promoters by direct interactions with regulatory proteins and serves for the assembly of a functional pre-initiation complex with RNA polymerase II and the general transcription factors. The protein is Mediator of RNA polymerase II transcription subunit 9 (MED9) of Arabidopsis thaliana (Mouse-ear cress).